A 357-amino-acid chain; its full sequence is Probable 3'(2'),5'-bisphosphate nucleotidase 3 (357 aa).

Asp46 serves as the catalytic Proton acceptor. Mg(2+) contacts are provided by Glu71, Asp135, and Ile137. Residue Thr140 is the Proton acceptor of the active site. Adenosine 3',5'-bisphosphate is bound by residues Thr140, Ser256, Lys259, and Arg273. Positions 256, 259, and 273 each coordinate AMP.

It belongs to the inositol monophosphatase superfamily. Mg(2+) serves as cofactor.

The catalysed reaction is 3'-phosphoadenylyl sulfate + H2O = adenosine 5'-phosphosulfate + phosphate. It catalyses the reaction adenosine 3',5'-bisphosphate + H2O = AMP + phosphate. It carries out the reaction adenosine 2',5'-bisphosphate + H2O = AMP + phosphate. The enzyme catalyses 1D-myo-inositol 1,4-bisphosphate + H2O = 1D-myo-inositol 4-phosphate + phosphate. The catalysed reaction is 1D-myo-inositol 1,3,4-trisphosphate + H2O = 1D-myo-inositol 3,4-bisphosphate + phosphate. It participates in signal transduction; phosphatidylinositol signaling pathway. Functionally, phosphatase that converts adenosine 3'-phosphate 5'-phosphosulfate (PAPS) to adenosine 5'-phosphosulfate (APS) and 3'(2')-phosphoadenosine 5'-phosphate (PAP) to AMP. Is also able to hydrolyze inositol 1,4-bisphosphate and inositol 1,3,4-trisphosphate. The protein is Probable 3'(2'),5'-bisphosphate nucleotidase 3 (SAL3) of Arabidopsis thaliana (Mouse-ear cress).